Here is a 375-residue protein sequence, read N- to C-terminus: Succinyl-diaminopimelate desuccinylase (375 aa).

Histidine 66 contacts Zn(2+). Residue aspartate 68 is part of the active site. Aspartate 99 serves as a coordination point for Zn(2+). Glutamate 133 functions as the Proton acceptor in the catalytic mechanism. Residues glutamate 134, glutamate 162, and histidine 348 each coordinate Zn(2+).

It belongs to the peptidase M20A family. DapE subfamily. In terms of assembly, homodimer. Zn(2+) serves as cofactor. The cofactor is Co(2+).

The enzyme catalyses N-succinyl-(2S,6S)-2,6-diaminopimelate + H2O = (2S,6S)-2,6-diaminopimelate + succinate. It functions in the pathway amino-acid biosynthesis; L-lysine biosynthesis via DAP pathway; LL-2,6-diaminopimelate from (S)-tetrahydrodipicolinate (succinylase route): step 3/3. Catalyzes the hydrolysis of N-succinyl-L,L-diaminopimelic acid (SDAP), forming succinate and LL-2,6-diaminopimelate (DAP), an intermediate involved in the bacterial biosynthesis of lysine and meso-diaminopimelic acid, an essential component of bacterial cell walls. The sequence is that of Succinyl-diaminopimelate desuccinylase from Yersinia enterocolitica serotype O:8 / biotype 1B (strain NCTC 13174 / 8081).